Reading from the N-terminus, the 638-residue chain is MDSDTSPNPFASSPPSSPSPRPSLPPPVPRKPSSLVSAASGSPPPTHRASFPDPARHPKMGATVPGPKPKTGYCCSIDKDISAGEQVHIVDALKTTEGGTASYITYVIRLGTHTVRRRYSAFLSLHQSLTGLYPVLIIPPIPSKQSLTDYAVKGQSKAREDATIIARRKRLLEDFLQRLIRHPILGGEHVLHRFLEEDVSWSEVLHSPPISLLSKNPLHAPSHNPTFQPTTPTSPSEAPATTSYIAHHLLPTPSPSHPLRQPDQRFMDSEAFTEKFQSHFSGTMEKVNRRVTKRWGERAHDMSELGGIWNGFSLVEQGKLGDAIEKVGRAVDAEYLATAALLQSWEKTTTEPLHIYSQFATLIRARLSFRHQKHVQYELVQEALETQRDKLEILENAEREARRLEEALERGGSVLASPQLEPEAARDERERAQRRARASQGFGLLSAVKHSLSGMIDMDPEATRRANIAKTRDNISQLEDSYQAAAQDLKYASMTLQADLDRFQRQKVADLREMAINLSQVHRDWCKQNLEAWKAAQAAVREIDPHPNRPAQTQTQVQSQQSHAGPSTLHAQTEDDVSKLGVDAMKNEIERVEIEIADKPLPKPSLAETGGDGVVPSPQPRQENDTEEQEGHGPLGPL.

The span at 1-14 (MDSDTSPNPFASSP) shows a compositional bias: low complexity. The interval 1–69 (MDSDTSPNPF…MGATVPGPKP (69 aa)) is disordered. Over residues 15–30 (PSSPSPRPSLPPPVPR) the composition is skewed to pro residues. Positions 84-201 (GEQVHIVDAL…HRFLEEDVSW (118 aa)) constitute a PX domain. A 1,2-diacyl-sn-glycero-3-phospho-(1D-myo-inositol-3-phosphate) contacts are provided by Arg118, Ser120, Lys144, and Arg168. Disordered regions lie at residues 215–239 (KNPL…SEAP), 408–432 (LERG…RERA), and 545–638 (PHPN…LGPL). Low complexity predominate over residues 225-239 (PTFQPTTPTSPSEAP). Positions 423 to 432 (EAARDERERA) are enriched in basic and acidic residues. Low complexity predominate over residues 552–562 (QTQTQVQSQQS). Over residues 585–601 (MKNEIERVEIEIADKPL) the composition is skewed to basic and acidic residues.

The protein belongs to the sorting nexin family.

It localises to the endosome membrane. Its subcellular location is the endomembrane system. Functionally, may be required for cytoplasm to vacuole transport (Cvt) and pexophagy. This chain is Sorting nexin-41 (SNX41), found in Cryptococcus neoformans var. neoformans serotype D (strain JEC21 / ATCC MYA-565) (Filobasidiella neoformans).